The following is a 389-amino-acid chain: Coproporphyrin III ferrochelatase (389 aa).

2 residues coordinate Fe-coproporphyrin III: S70 and Y139. Position 205 (H205) interacts with Fe(2+). Positions 207–229 (IPSTDAGKSGPSGRPDSGEPWGE) are disordered. A Fe(2+)-binding site is contributed by E303.

Belongs to the ferrochelatase family.

The protein localises to the cytoplasm. The catalysed reaction is Fe-coproporphyrin III + 2 H(+) = coproporphyrin III + Fe(2+). The protein operates within porphyrin-containing compound metabolism; protoheme biosynthesis. Its function is as follows. Involved in coproporphyrin-dependent heme b biosynthesis. Catalyzes the insertion of ferrous iron into coproporphyrin III to form Fe-coproporphyrin III. In Leifsonia xyli subsp. xyli (strain CTCB07), this protein is Coproporphyrin III ferrochelatase.